The sequence spans 433 residues: 23S rRNA (uracil(1939)-C(5))-methyltransferase RlmD (433 aa).

In terms of domain architecture, TRAM spans 10-68 (RTTTRQIITVSVNDLDSFGQGVARHNGKTLFIPGLLPQENAEVTVTEDKKQYARAKVVR). 4 residues coordinate [4Fe-4S] cluster: cysteine 81, cysteine 87, cysteine 90, and cysteine 162. S-adenosyl-L-methionine-binding residues include glutamine 265, phenylalanine 294, asparagine 299, glutamate 315, asparagine 342, and aspartate 363. Cysteine 389 (nucleophile) is an active-site residue.

It belongs to the class I-like SAM-binding methyltransferase superfamily. RNA M5U methyltransferase family. RlmD subfamily.

It carries out the reaction uridine(1939) in 23S rRNA + S-adenosyl-L-methionine = 5-methyluridine(1939) in 23S rRNA + S-adenosyl-L-homocysteine + H(+). Catalyzes the formation of 5-methyl-uridine at position 1939 (m5U1939) in 23S rRNA. This chain is 23S rRNA (uracil(1939)-C(5))-methyltransferase RlmD, found in Escherichia coli (strain UTI89 / UPEC).